We begin with the raw amino-acid sequence, 468 residues long: MAPPPARVHLGAFLAVTPNPGSAASGTEAAAATPSKVWGSSAGRIEPRGGGRGALPTSMGQHGPSARARAGRAPGPRPAREASPRLRVHKTFKFVVVGVLLQVVPSSAATIKLHDQSIGTQQWEHSPLGELCPPGSHRSEHPGACNRCTEGVGYTNASNNLFACLPCTACKSDEEERSPCTTTRNTACQCKPGTFRNDNSAEMCRKCSRGCPRGMVKVKDCTPWSDIECVHKESGNGHNIWVILVVTLVVPLLLVAVLIVCCCIGSGCGGDPKCMDRVCFWRLGLLRGPGAEDNAHNEILSNADSLSTFVSEQQMESQEPADLTGVTVQSPGEAQCLLGPAEAEGSQRRRLLVPANGADPTETLMLFFDKFANIVPFDSWDQLMRQLDLTKNEIDVVRAGTAGPGDALYAMLMKWVNKTGRNASIHTLLDALERMEERHAREKIQDLLVDSGKFIYLEDGTGSAVSLE.

A signal peptide spans 1 to 23 (MAPPPARVHLGAFLAVTPNPGSA). Residues 17–82 (TPNPGSAASG…APGPRPAREA (66 aa)) form a disordered region. Residues 20-34 (PGSAASGTEAAAATP) show a composition bias toward low complexity. Residues 24-239 (ASGTEAAAAT…VHKESGNGHN (216 aa)) are Extracellular-facing. An Omega-N-methylarginine modification is found at Arg52. Residues 63–74 (GPSARARAGRAP) show a composition bias toward low complexity. TNFR-Cys repeat units lie at residues 107–145 (SAAT…PGAC), 147–188 (RCTE…NTAC), and 189–229 (QCKP…DIEC). 7 disulfides stabilise this stretch: Cys132-Cys145, Cys148-Cys164, Cys167-Cys180, Cys170-Cys188, Cys190-Cys204, Cys207-Cys221, and Cys211-Cys229. N-linked (GlcNAc...) asparagine glycosylation occurs at Asn156. A helical transmembrane segment spans residues 240–262 (IWVILVVTLVVPLLLVAVLIVCC). The Cytoplasmic segment spans residues 263–468 (CIGSGCGGDP…DGTGSAVSLE (206 aa)). Residues 365–448 (MLFFDKFANI…HAREKIQDLL (84 aa)) form the Death domain. 3 positions are modified to phosphoserine: Ser424, Ser463, and Ser466.

In terms of assembly, monomer. Homooligomers and heterooligomers with TNFRSF10B. Three TNFRSF10A molecules interact with the TNFSF10 homotrimer. Can interact with TRADD and RIPK1. Interacts with ARAP1. In the absence of stimulation, interacts with BIRC2, DDX3X and GSK3B. The interaction with BIRC2 and DDX3X is further enhanced upon receptor stimulation and accompanied by DDX3X and BIRC2 cleavage. Interacts with ZDHHC3. Interacts with PTPN6; this interaction enables the inhibition of T-cell receptor signaling via LCK. (Microbial infection) Interacts with HCMV protein UL141; this interaction prevents TNFRSF10A cell surface expression. Post-translationally, palmitoylated. Palmitoylation of TNFRSF10A is required for its association with lipid rafts, oligomerization and function in TRAIL-induced cell death. Palmitoylated by ZDHHC3. As to expression, widely expressed. High levels are found in spleen, peripheral blood leukocytes, small intestine and thymus, but also in K-562 erythroleukemia cells, MCF-7 breast carcinoma cells and activated T-cells.

The protein localises to the cell membrane. It is found in the membrane raft. Its subcellular location is the cytoplasm. It localises to the cytosol. Functionally, receptor for the cytotoxic ligand TNFSF10/TRAIL. The adapter molecule FADD recruits caspase-8 to the activated receptor. The resulting death-inducing signaling complex (DISC) performs caspase-8 proteolytic activation which initiates the subsequent cascade of caspases (aspartate-specific cysteine proteases) mediating apoptosis. Promotes the activation of NF-kappa-B. The protein is Tumor necrosis factor receptor superfamily member 10A (TNFRSF10A) of Homo sapiens (Human).